Here is an 879-residue protein sequence, read N- to C-terminus: Alanine--tRNA ligase 1 (879 aa).

Zn(2+) is bound by residues His-566, His-570, Cys-668, and His-672.

Belongs to the class-II aminoacyl-tRNA synthetase family. Requires Zn(2+) as cofactor.

Its subcellular location is the cytoplasm. It catalyses the reaction tRNA(Ala) + L-alanine + ATP = L-alanyl-tRNA(Ala) + AMP + diphosphate. In terms of biological role, catalyzes the attachment of alanine to tRNA(Ala) in a two-step reaction: alanine is first activated by ATP to form Ala-AMP and then transferred to the acceptor end of tRNA(Ala). Also edits incorrectly charged Ser-tRNA(Ala) and Gly-tRNA(Ala) via its editing domain. This chain is Alanine--tRNA ligase 1, found in Lachnoclostridium phytofermentans (strain ATCC 700394 / DSM 18823 / ISDg) (Clostridium phytofermentans).